The following is a 385-amino-acid chain: Succinyl-diaminopimelate desuccinylase (385 aa).

Residue His78 coordinates Zn(2+). Residue Asp80 is part of the active site. Asp110 lines the Zn(2+) pocket. Glu144 functions as the Proton acceptor in the catalytic mechanism. Zn(2+) is bound by residues Glu145, Glu173, and His358.

Belongs to the peptidase M20A family. DapE subfamily. As to quaternary structure, homodimer. Zn(2+) is required as a cofactor. Co(2+) serves as cofactor.

It catalyses the reaction N-succinyl-(2S,6S)-2,6-diaminopimelate + H2O = (2S,6S)-2,6-diaminopimelate + succinate. It functions in the pathway amino-acid biosynthesis; L-lysine biosynthesis via DAP pathway; LL-2,6-diaminopimelate from (S)-tetrahydrodipicolinate (succinylase route): step 3/3. Catalyzes the hydrolysis of N-succinyl-L,L-diaminopimelic acid (SDAP), forming succinate and LL-2,6-diaminopimelate (DAP), an intermediate involved in the bacterial biosynthesis of lysine and meso-diaminopimelic acid, an essential component of bacterial cell walls. The sequence is that of Succinyl-diaminopimelate desuccinylase from Gluconacetobacter diazotrophicus (strain ATCC 49037 / DSM 5601 / CCUG 37298 / CIP 103539 / LMG 7603 / PAl5).